The sequence spans 264 residues: Triosephosphate isomerase (264 aa).

13–15 provides a ligand contact to substrate; sequence NWK. H106 acts as the Electrophile in catalysis. E179 (proton acceptor) is an active-site residue. Residues G185, S223, and 244 to 245 contribute to the substrate site; that span reads GG.

This sequence belongs to the triosephosphate isomerase family. Homodimer.

It localises to the cytoplasm. The enzyme catalyses D-glyceraldehyde 3-phosphate = dihydroxyacetone phosphate. It participates in carbohydrate biosynthesis; gluconeogenesis. It functions in the pathway carbohydrate degradation; glycolysis; D-glyceraldehyde 3-phosphate from glycerone phosphate: step 1/1. Its function is as follows. Involved in the gluconeogenesis. Catalyzes stereospecifically the conversion of dihydroxyacetone phosphate (DHAP) to D-glyceraldehyde-3-phosphate (G3P). The chain is Triosephosphate isomerase from Acinetobacter baumannii (strain AB0057).